Consider the following 122-residue polypeptide: Copper metallothionein 1 (122 aa).

The cys-rich copper-binding 1 stretch occupies residues 1–35; sequence MACNCPPQKNTACCSTSEAQDKCTCQKGNCECKAC. The spacer B1 stretch occupies residues 36–50; sequence PNSTKTSESGGKAST. Residues 51–72 are cys-rich copper-binding 2; sequence CNCGGSGEACTCPPGQCACDKC. Positions 73–81 are spacer B2; the sequence is PKKAKSVST. The interval 82-103 is cys-rich copper-binding 3; the sequence is CGCGGSGAACSCPPGKCACDNC. The spacer B3 stretch occupies residues 104–113; it reads PKQAQEKVSS. The tract at residues 114–122 is cys-rich copper-binding 4; it reads CACSGSGAA.

Belongs to the metallothionein superfamily.

It is found in the cytoplasm. It localises to the cell cortex. Copper metallothionein that protects the cell against copper toxicity by tightly chelating copper ions. Required for antioxidant-mediated growth rescue in the presence of fluconazole. Acts as a critical factors for lung colonization and virulence. This Cryptococcus neoformans var. grubii serotype A (strain H99 / ATCC 208821 / CBS 10515 / FGSC 9487) (Filobasidiella neoformans var. grubii) protein is Copper metallothionein 1.